Reading from the N-terminus, the 477-residue chain is Sensor protein kinase PmrB (477 aa).

2 helical membrane passes run 13 to 33 and 161 to 181; these read LLVN…ALTY and LLLF…GGLV. The region spanning 186–238 is the HAMP domain; the sequence is ARGLAPLREVQAEVQQRSARHLQPIAVEAVPLEIRGLIDELNLLLERLRTALE. The Histidine kinase domain maps to 246-459; it reads DAAHEIRTPL…EVQVFLPKTQ (214 aa). His-249 carries the phosphohistidine; by autocatalysis modification. The interval 455 to 477 is disordered; that stretch reads LPKTQPDATRPPARGPDSGRSHI.

It is found in the membrane. It carries out the reaction ATP + protein L-histidine = ADP + protein N-phospho-L-histidine.. Functionally, member of the two-component regulatory system PmrA/PmrB that plays a role in the regulation of resistance towards polymyxin B and cationic antimicrobial peptides in response to limiting concentrations of Mg(2+). Also autoregulates its own pmrAB operon under Mg(2+)-limiting conditions. May function as a membrane-associated protein kinase that phosphorylates PmrA in response to environmental signals leading to activation of specific gene promoters. In Pseudomonas aeruginosa (strain ATCC 15692 / DSM 22644 / CIP 104116 / JCM 14847 / LMG 12228 / 1C / PRS 101 / PAO1), this protein is Sensor protein kinase PmrB (pmrB).